We begin with the raw amino-acid sequence, 204 residues long: Somatotropin (204 aa).

The signal sequence occupies residues Met-1–Ser-17. Gln-18 is subject to Pyrrolidone carboxylic acid. His-36 serves as a coordination point for Zn(2+). An intrachain disulfide couples Cys-69 to Cys-177. Glu-186 is a binding site for Zn(2+). A disulfide bridge connects residues Cys-194 and Cys-202.

Belongs to the somatotropin/prolactin family.

It localises to the secreted. In terms of biological role, growth hormone plays an important role in growth control and is involved in the regulation of several anabolic processes. Implicated as an osmoregulatory substance important for seawater adaptation. This is Somatotropin (gh) from Acanthopagrus butcheri (Australian black bream).